The following is a 254-amino-acid chain: 4-hydroxy-tetrahydrodipicolinate reductase (254 aa).

NAD(+) is bound by residues 8–13 (GCSGKM), Asp35, 86–88 (CST), and 110–113 (SANM). The active-site Proton donor/acceptor is His143. His144 provides a ligand contact to (S)-2,3,4,5-tetrahydrodipicolinate. Lys147 (proton donor) is an active-site residue. 153–154 (GT) lines the (S)-2,3,4,5-tetrahydrodipicolinate pocket.

It belongs to the DapB family.

The protein localises to the cytoplasm. It carries out the reaction (S)-2,3,4,5-tetrahydrodipicolinate + NAD(+) + H2O = (2S,4S)-4-hydroxy-2,3,4,5-tetrahydrodipicolinate + NADH + H(+). The enzyme catalyses (S)-2,3,4,5-tetrahydrodipicolinate + NADP(+) + H2O = (2S,4S)-4-hydroxy-2,3,4,5-tetrahydrodipicolinate + NADPH + H(+). The protein operates within amino-acid biosynthesis; L-lysine biosynthesis via DAP pathway; (S)-tetrahydrodipicolinate from L-aspartate: step 4/4. Functionally, catalyzes the conversion of 4-hydroxy-tetrahydrodipicolinate (HTPA) to tetrahydrodipicolinate. The sequence is that of 4-hydroxy-tetrahydrodipicolinate reductase from Clostridium perfringens (strain SM101 / Type A).